The primary structure comprises 347 residues: Phosphate acyltransferase (347 aa).

The protein belongs to the PlsX family. In terms of assembly, homodimer. Probably interacts with PlsY.

It localises to the cytoplasm. The catalysed reaction is a fatty acyl-[ACP] + phosphate = an acyl phosphate + holo-[ACP]. It participates in lipid metabolism; phospholipid metabolism. Catalyzes the reversible formation of acyl-phosphate (acyl-PO(4)) from acyl-[acyl-carrier-protein] (acyl-ACP). This enzyme utilizes acyl-ACP as fatty acyl donor, but not acyl-CoA. This chain is Phosphate acyltransferase, found in Lawsonia intracellularis (strain PHE/MN1-00).